A 289-amino-acid chain; its full sequence is MFKGVYPAIITPFKNKEVDFDGLEENINFLIENGVSGIVAVGTTGESPTLSHEEHKKVIEKVVDVVNGRVQVIAGAGSNCTEEAIELSVFAEDVGADAVLSITPYYNKPTQEGLRKHFGKVAESINLPIVLYNVPSRTAVNLEPKTVKLLAEEYSNISAVKEANPNLSQVSELIHDAKITVLSGNDELTLPIIALGGKGVISVVANIVPKEFVEMVNYALEGDFEKAREIHYKLFPLMKAMFIETNPIPVKTALNMMGRPAGELRLPLCEMSEEHKKILENVLKDLGLI.

Position 44 (Thr44) interacts with pyruvate. The Proton donor/acceptor role is filled by Tyr132. The Schiff-base intermediate with substrate role is filled by Lys161. Ile201 contacts pyruvate.

The protein belongs to the DapA family. As to quaternary structure, homotetramer; dimer of dimers.

The protein resides in the cytoplasm. The enzyme catalyses L-aspartate 4-semialdehyde + pyruvate = (2S,4S)-4-hydroxy-2,3,4,5-tetrahydrodipicolinate + H2O + H(+). The protein operates within amino-acid biosynthesis; L-lysine biosynthesis via DAP pathway; (S)-tetrahydrodipicolinate from L-aspartate: step 3/4. Its function is as follows. Catalyzes the condensation of (S)-aspartate-beta-semialdehyde [(S)-ASA] and pyruvate to 4-hydroxy-tetrahydrodipicolinate (HTPA). The sequence is that of 4-hydroxy-tetrahydrodipicolinate synthase from Methanocaldococcus jannaschii (strain ATCC 43067 / DSM 2661 / JAL-1 / JCM 10045 / NBRC 100440) (Methanococcus jannaschii).